Here is a 356-residue protein sequence, read N- to C-terminus: Probable protein phosphatase 2C T23F11.1 (356 aa).

The 264-residue stretch at 23–286 (LVGSSCMQGW…DNMTVVLVGL (264 aa)) folds into the PPM-type phosphatase domain. Residues aspartate 59, glycine 60, aspartate 228, and aspartate 277 each contribute to the Mn(2+) site. The interval 336–356 (NAANQEEEEDDNEPAPANFQV) is disordered.

Belongs to the PP2C family. Requires Mg(2+) as cofactor. It depends on Mn(2+) as a cofactor.

The catalysed reaction is O-phospho-L-seryl-[protein] + H2O = L-seryl-[protein] + phosphate. The enzyme catalyses O-phospho-L-threonyl-[protein] + H2O = L-threonyl-[protein] + phosphate. This is Probable protein phosphatase 2C T23F11.1 (ppm-2) from Caenorhabditis elegans.